Reading from the N-terminus, the 287-residue chain is 4-hydroxybenzoate octaprenyltransferase (287 aa).

The next 6 membrane-spanning stretches (helical) occupy residues 41–61, 92–112, 133–153, 160–180, 218–238, and 267–287; these read LPLLVIFTVGTVLMRSAGCAI, VALAAALSLLAFLLILPLNAL, FFAIPQAYLGIAFGFGIPMAF, VPMLAWVMLLANVFWSVAYDT, LGIYVGIGVLLGFGALYWLGW, and NNWLGGALFAGIAAHYAATWF.

The protein belongs to the UbiA prenyltransferase family. It depends on Mg(2+) as a cofactor.

The protein resides in the cell inner membrane. The enzyme catalyses all-trans-octaprenyl diphosphate + 4-hydroxybenzoate = 4-hydroxy-3-(all-trans-octaprenyl)benzoate + diphosphate. Its pathway is cofactor biosynthesis; ubiquinone biosynthesis. In terms of biological role, catalyzes the prenylation of para-hydroxybenzoate (PHB) with an all-trans polyprenyl group. Mediates the second step in the final reaction sequence of ubiquinone-8 (UQ-8) biosynthesis, which is the condensation of the polyisoprenoid side chain with PHB, generating the first membrane-bound Q intermediate 3-octaprenyl-4-hydroxybenzoate. In Paraburkholderia xenovorans (strain LB400), this protein is 4-hydroxybenzoate octaprenyltransferase.